A 249-amino-acid polypeptide reads, in one-letter code: Aspartate/glutamate leucyltransferase (249 aa).

It belongs to the R-transferase family. Bpt subfamily.

The protein localises to the cytoplasm. The enzyme catalyses N-terminal L-glutamyl-[protein] + L-leucyl-tRNA(Leu) = N-terminal L-leucyl-L-glutamyl-[protein] + tRNA(Leu) + H(+). The catalysed reaction is N-terminal L-aspartyl-[protein] + L-leucyl-tRNA(Leu) = N-terminal L-leucyl-L-aspartyl-[protein] + tRNA(Leu) + H(+). Its function is as follows. Functions in the N-end rule pathway of protein degradation where it conjugates Leu from its aminoacyl-tRNA to the N-termini of proteins containing an N-terminal aspartate or glutamate. In Brucella anthropi (strain ATCC 49188 / DSM 6882 / CCUG 24695 / JCM 21032 / LMG 3331 / NBRC 15819 / NCTC 12168 / Alc 37) (Ochrobactrum anthropi), this protein is Aspartate/glutamate leucyltransferase.